Reading from the N-terminus, the 82-residue chain is Opistoporin-1 (82 aa).

The signal sequence occupies residues 1–22 (MNRKLLFVTLMVTMLVMQPSEG). Residues 67–82 (EAGQMPFDEFMDILYE) constitute a propeptide that is removed on maturation.

Expressed by the venom gland.

The protein resides in the secreted. It is found in the target cell membrane. At high concentrations, acts as a pore former in cellular membranes and causes the leakage of the cells. At submicromolar concentrations, degranulates granulocytes and has a weak hemolytic activity against human erythrocytes. Also strongly inhibits the production of superoxide anions. Has a strong antibacterial activity against Gram-negative bacteria but is less active against Gram-positive bacteria. Also has antifungal activity. In Opistophthalmus carinatus (African yellow leg scorpion), this protein is Opistoporin-1.